An 892-amino-acid chain; its full sequence is Alanine--tRNA ligase (892 aa).

Residues histidine 593, histidine 597, cysteine 694, and histidine 698 each contribute to the Zn(2+) site.

This sequence belongs to the class-II aminoacyl-tRNA synthetase family. It depends on Zn(2+) as a cofactor.

The protein localises to the cytoplasm. The enzyme catalyses tRNA(Ala) + L-alanine + ATP = L-alanyl-tRNA(Ala) + AMP + diphosphate. Its function is as follows. Catalyzes the attachment of alanine to tRNA(Ala) in a two-step reaction: alanine is first activated by ATP to form Ala-AMP and then transferred to the acceptor end of tRNA(Ala). Also edits incorrectly charged Ser-tRNA(Ala) and Gly-tRNA(Ala) via its editing domain. The sequence is that of Alanine--tRNA ligase from Helicobacter hepaticus (strain ATCC 51449 / 3B1).